The primary structure comprises 199 residues: Guanylyl cyclase-activating protein 1 (199 aa).

Gly-2 carries the N-myristoyl glycine lipid modification. A Deamidated asparagine modification is found at Asn-3. 4 consecutive EF-hand domains span residues 13–48 (SATECHQWYKKFMTECPSGQLTLYEFKQFFGLKNLS), 50–85 (SANKYVEQMFETFDFNKDGYIDFMEYVAALSLVLKG), 86–121 (KVDQKLRWYFKLYDVDGNGCIDRGELLNIIKAIRAI), and 129–164 (TAEEFTNMVFDKIDINGDGELSLEEFMEGVQKDEVL). Positions 63, 65, 67, 69, 74, 99, 101, 103, 105, 110, 142, 144, 146, 148, and 153 each coordinate Ca(2+).

Retina, in rod and cone outer segments, and pineal gland.

In terms of biological role, stimulates retinal guanylyl cyclase when free calcium ions concentration is low and inhibits guanylyl cyclase when free calcium ions concentration is elevated. This Ca(2+)-sensitive regulation of retinal guanylyl cyclase is a key event in recovery of the dark state of rod photoreceptors following light exposure. The sequence is that of Guanylyl cyclase-activating protein 1 (GUCA1A) from Gallus gallus (Chicken).